Consider the following 938-residue polypeptide: Translation initiation factor IF-2 (938 aa).

Residues 55-322 form a disordered region; that stretch reads KAEASAAPAA…RKSKRARRQE (268 aa). Low complexity-rich tracts occupy residues 57–68 and 77–117; these read EASAAPAAPAEK and KKAA…AAAP. Residues 118 to 136 show a composition bias toward pro residues; that stretch reads KPGPKPAPVAEQPAPPAEP. 3 stretches are compositionally biased toward low complexity: residues 141–153, 180–198, and 224–233; these read APEA…APAA, GMGR…AGDN, and MMPKSPSAFG. Residues 247–293 are compositionally biased toward gly residues; the sequence is PGRGGAPGRGGAPGRGGVGTGAPGRGGAPGGGFGPSGGGRPGGGRPG. The segment covering 310-319 has biased composition (basic residues); sequence RRGRKSKRAR. In terms of domain architecture, tr-type G spans 431 to 603; the sequence is ARPPVVTVMG…VVLTADASLD (173 aa). Residues 440-447 are G1; the sequence is GHVDHGKT. 440 to 447 contacts GTP; that stretch reads GHVDHGKT. Residues 465 to 469 form a G2 region; that stretch reads GITQH. The G3 stretch occupies residues 490 to 493; that stretch reads DTPG. GTP contacts are provided by residues 490–494 and 544–547; these read DTPGH and NKID. Positions 544 to 547 are G4; it reads NKID. The segment at 580–582 is G5; that stretch reads SAK.

This sequence belongs to the TRAFAC class translation factor GTPase superfamily. Classic translation factor GTPase family. IF-2 subfamily.

The protein resides in the cytoplasm. One of the essential components for the initiation of protein synthesis. Protects formylmethionyl-tRNA from spontaneous hydrolysis and promotes its binding to the 30S ribosomal subunits. Also involved in the hydrolysis of GTP during the formation of the 70S ribosomal complex. In Nocardioides sp. (strain ATCC BAA-499 / JS614), this protein is Translation initiation factor IF-2.